The following is a 192-amino-acid chain: MTEKQNLFGPVVRLTGVLVVLCGLIYPAMVTGIAQGVMKDHADGSLIYEKGEIIGSKRIGQEFTSAKYFHGRISSIAYKAEGSGSNNYAPSNPELRQRTEESIEKWKEDNPSVPVREVPIDLVTNSGSGLDPDISPKAAYAQVDRVAKETKISKEELKAIIASHIEGRAFGLYGEERVNVLQLNMEVKKRIQ.

Residues 14–34 (LTGVLVVLCGLIYPAMVTGIA) traverse the membrane as a helical segment.

The protein belongs to the KdpC family. As to quaternary structure, the system is composed of three essential subunits: KdpA, KdpB and KdpC.

The protein localises to the cell membrane. Functionally, part of the high-affinity ATP-driven potassium transport (or Kdp) system, which catalyzes the hydrolysis of ATP coupled with the electrogenic transport of potassium into the cytoplasm. This subunit acts as a catalytic chaperone that increases the ATP-binding affinity of the ATP-hydrolyzing subunit KdpB by the formation of a transient KdpB/KdpC/ATP ternary complex. This chain is Potassium-transporting ATPase KdpC subunit, found in Bacillus cytotoxicus (strain DSM 22905 / CIP 110041 / 391-98 / NVH 391-98).